A 121-amino-acid polypeptide reads, in one-letter code: Large ribosomal subunit protein uL14 (121 aa).

It belongs to the universal ribosomal protein uL14 family. As to quaternary structure, part of the 50S ribosomal subunit. Forms a cluster with proteins L3 and L19. In the 70S ribosome, L14 and L19 interact and together make contacts with the 16S rRNA in bridges B5 and B8.

In terms of biological role, binds to 23S rRNA. Forms part of two intersubunit bridges in the 70S ribosome. This is Large ribosomal subunit protein uL14 from Porphyromonas gingivalis (strain ATCC 33277 / DSM 20709 / CIP 103683 / JCM 12257 / NCTC 11834 / 2561).